Reading from the N-terminus, the 232-residue chain is Cytidylate kinase (232 aa).

10 to 18 (GPAASGKST) is an ATP binding site.

It belongs to the cytidylate kinase family. Type 1 subfamily.

The protein localises to the cytoplasm. The enzyme catalyses CMP + ATP = CDP + ADP. It carries out the reaction dCMP + ATP = dCDP + ADP. The polypeptide is Cytidylate kinase (Phytoplasma mali (strain AT)).